A 589-amino-acid chain; its full sequence is Carbonic anhydrase (589 aa).

Alpha-carbonic anhydrase domains lie at 59-316 (HDYN…YEYK) and 321-585 (DKYN…YGYN). 258–259 (TT) is a substrate binding site. The interval 390 to 589 (MQINFGDPPA…TVYGYNGAAA (200 aa)) is catalytic. 3 residues coordinate Zn(2+): His420, His422, and His440.

It belongs to the alpha-carbonic anhydrase family. The cofactor is Zn(2+).

The enzyme catalyses hydrogencarbonate + H(+) = CO2 + H2O. In terms of biological role, reversible hydration of carbon dioxide. This Dunaliella salina (Green alga) protein is Carbonic anhydrase (DCA).